Reading from the N-terminus, the 382-residue chain is Leucoanthocyanidin reductase (382 aa).

NADP(+) is bound by residues 19–25, Arg44, and Lys52; that span reads GGTGFIG. The active-site Proton acceptor is Lys142. Arg146 is an NADP(+) binding site.

It belongs to the NmrA-type oxidoreductase family. Isoflavone reductase subfamily. In terms of assembly, monomer.

The catalysed reaction is (2R,3S)-catechin + NADP(+) + H2O = (2R,3S,4S)-leucocyanidin + NADPH + H(+). It participates in flavonoid metabolism; proanthocyanidin biosynthesis. Catalyzes the synthesis of catechin from 3,4-cis-leucocyanidin. Also synthesizes afzelechin and gallocatechin. This chain is Leucoanthocyanidin reductase (LAR), found in Desmodium uncinatum (Silverleaf Spanish clover).